The following is a 96-amino-acid chain: MLMMYMLFIMMKTYPMLSYHMMSYHIMLYTIMWYMKYSTYMRLWLLYKSYFIFIFIWTNNNYNNNYWYVTMLMNTYLYYNMNIHFLTINKKFLYSL.

Its subcellular location is the mitochondrion. This is an uncharacterized protein from Saccharomyces cerevisiae (strain ATCC 204508 / S288c) (Baker's yeast).